The following is a 188-amino-acid chain: Transcription factor FapR (188 aa).

It belongs to the FapR family.

Its function is as follows. Transcriptional factor involved in regulation of membrane lipid biosynthesis by repressing genes involved in fatty acid and phospholipid metabolism. This is Transcription factor FapR from Bacillus velezensis (strain DSM 23117 / BGSC 10A6 / LMG 26770 / FZB42) (Bacillus amyloliquefaciens subsp. plantarum).